Consider the following 77-residue polypeptide: Acyl carrier protein (77 aa).

In terms of domain architecture, Carrier spans 2-77 (SDIAARVKKI…DATKFISEAQ (76 aa)). Ser37 is modified (O-(pantetheine 4'-phosphoryl)serine).

The protein belongs to the acyl carrier protein (ACP) family. 4'-phosphopantetheine is transferred from CoA to a specific serine of apo-ACP by AcpS. This modification is essential for activity because fatty acids are bound in thioester linkage to the sulfhydryl of the prosthetic group.

It localises to the cytoplasm. It participates in lipid metabolism; fatty acid biosynthesis. In terms of biological role, carrier of the growing fatty acid chain in fatty acid biosynthesis. The sequence is that of Acyl carrier protein from Jannaschia sp. (strain CCS1).